Reading from the N-terminus, the 120-residue chain is ATP-dependent Clp protease adapter protein ClpS (120 aa).

It belongs to the ClpS family. Binds to the N-terminal domain of the chaperone ClpA.

Its function is as follows. Involved in the modulation of the specificity of the ClpAP-mediated ATP-dependent protein degradation. This chain is ATP-dependent Clp protease adapter protein ClpS, found in Pseudomonas fluorescens (strain ATCC BAA-477 / NRRL B-23932 / Pf-5).